Consider the following 3066-residue polypeptide: MSLALNDLLICCRQLEHDRATERRKEVDKFKRLIQDPETVQHLDRHSDSKQGKYLNWDAVFRFLQKYIQKEMESLRTAKSNVSATTQSSRQKKMQEISSLVRYFIKCANKRAPRLKCQDLLNYVMDTVKDSSNGLTYGADCSNILLKDILSVRKYWCEVSQQQWLELFSLYFRLYLKPSQDINRVLVARIIHAVTRGCCSQTDGLPSKFLDLFSKAIQYARQEKSSPGLSHILAALNIFLKSLAVNFRKRVCEAGDEILPTLLYIWTQHRLNDSLKEVIIELIQLQIYIHHPQGARAPEEGAYESMKWKSILYNLYDLLVNEISHIGSRGKYSSGSRNIAVKENLIDLMADICYQLFDADTRSVEISQSYVTQRESTDYSVPCKRRKIDVGWEVIKDYLQKSQSDFDLVPWLQITTRLISKYPSSLPNCELSPLILILYQLLPQQRRGERIPYVLRCLKEVALCQGKKSNLESSQKSDLLKLWIKIWSITFRGISSGQTQTENFGLLEAIIQGSLVELDREFWKLFTGSACKPSSPSVCCLTLALSICVVPDAIKMGTEQSVCEANRSFSVKESIMRWLLFYQLEDDLEDSTELPPILQSNFPHLVVEKILVSLTMKNSKAAMKFFQSVPECEQHCEDKEEPSFSEVEELFLQTTFDKMDFLTTVKEYAVEKFQSSVGFSVQQNLKESLDHYLLGLSEQLLSNYSSEITSSETLVRCSSLLVGVLGCYCYMGIITEDEAHKSELFQKAKSLMQCAGESISLFKNKTNEESRIGSLRNVMHLCTSCLCIHTKHTPNKIASGFFLRLLTSKLMNDIADICKSLASCTKKPLDHGVHPGEDDEDGGGCDSLMEAEGPSSTGLSTAYPASSVSDANDYGENQNAVGAMSPLAADYLSKQDHLLLDMLRFLGRSVTASQSHTVSFRGADIRRKLLLLLDSSILDLMKPLHLHMYLVLLKDLPGNEHSLPMEDVVELLQPLSLVCSLHRRDQDVCKTILSNVLHIVTNLGQGSVDMESTRIAQGHFLTVMGAFWHLTKEKKCVFSVRMALVKCLQTLLEADPYSEWAILNVKGQDFPVNEAFSQFLADDHHQVRMLAAGSVNRLFQDMRQGDFSRSLKALPLKFQQTSFNNAYTTAEAGIRGLLCDSQNPDLLDEIYNRKSVLLMMIAVVLHCSPVCEKQALFALCKSVKENRLEPHLVKKVLEKVSESFGCRSLEDFMISHLDYLVLEWLNLQDTEYSLSSFPFMLLNYTSIEDFYRSCYKILIPHLVIRSHFDEVKSIANQIQKCWKSLLVDCFPKILVHILPYFAYEGTRDSYVSQKRETATKVYDTLKGEDFLGKQIDQVFISNLPEIVVELLMTLHETADSADSDASQSATALCDFSGDLDPAPNPPYFPSHVIQATFAYISNCHKTKFKSILEILSKIPDSYQKILLAICEQAAETNNVFKKHRILKIYHLFVSLLLKDIQSGLGGAWAFVLRDVIYTLIHYINKRSSHFTDVSLRSFSLCCDLLSRVCHTAVTQCKDALESHLHVIVGTLIPLVDYQEVQEQVLDLLKYLVIDNKDNKNLSVTIKLLDPFPDHVIFKDLRLTQQKIKYSGGPFSLLEEINHFLSVSAYNPLPLTRLEGLKDLRRQLEQHKDQMLDLLRASQDNPQDGIVVKLVVSLLQLSKMAVNQTGEREVLEAVGRCLGEIGPLDFSTIAVQHNKDVSYTKAYGLPEDRELQWTLIMLTALNNTLVEDSVKIRSAAATCLKNILATKIGHIFWENYKTSADPMLTYLQPFRTSRKKFLEVPRSVKEDVLEGLDAVNLWVPQSESHDIWIKTLTCAFLDSGGINSEILQLLKPMCEVKTDFCQMLLPYLIHDVLLQDTHESWRTLLSAHVRGFFTSCFKHSSQASRSATPANSDSESENFLRCCLDKKSQRTMLAVVDYLRRQKRPSSGTAFDDAFWLDLNYLEVAKVAQSCSAHFTALLYAEIYSDKKSTDEQEKRSPTFEEGSQGTTISSLSEKSKEETGISLQDLLLEIYRSIGEPDSLYGCGGGKMLQPLTRIRTYEHEATWEKALVTYDLETSISSSTRQSGIIQALQNLGLSHILSVYLKGLDYERREWCAELQELRYQAAWRNMQWGLCASAGQEVEGTSYHESLYNALQCLRNREFSTFYESLRYASLFRVKEVEELSKGSLESVYSLYPTLSRLQAIGELENSGELFSRSVTDRERSEAYWKWQKHSQLLKDSDFSFQEPLMALRTVILETLVQKEMERSQGACSKDILTKHLVEFSVLARTFKNTQLPERAIFKIKQYNSAICGISEWHLEEAQVFWAKKEQSLALSILKQMIKKLDSSFKDKENDAGLKVIYAECLRVCGSWLAETCLENPAVIMQTYLEKAVKVAGSYDGNSRELRNGQMKAFLSLARFSDTQYQRIENYMKSSEFENKQTLLKRAKEEVGLLREHKIQTNRYTVKVQRELELDECALRALREDRKRFLCKAVENYINCLLSGEEHDLWVFRLCSLWLENSGVSEVNGMMKKDGMKISSYKFLPLMYQLAARMGTKMTGGLGFHEVLNNLISRISLDHPHHTLFIILALANANKDEFLSKPETTRRSRITKSTSKENSHLDEDRTEAATRIIHSIRSKRCKMVKDMEALCDAYIILANMDASQWRAQRKGINIPANQPITKLKNLEDVVVPTMEIKVDPTGEYENLVTIKSFKTEFRLAGGLNLPKIIDCVGSDGKERRQLVKGRDDLRQDAVMQQVFQMCNTLLQRNTETRKRKLTICTYKVVPLSQRSGVLEWCTGTVPIGEYLVNSEDGAHRRYRPNDFSANQCQKKMMEVQKKSFEEKYDTFMTICQNFEPVFRYFCMEKFLDPAVWFEKRLAYTRSVATSSIVGYILGLGDRHVQNILINEQSAELVHIDLGVAFEQGKILPTPETVPFRLSRDIVDGMGITGVEGVFRRCCEKTMEVMRSSQETLLTIVEVLLYDPLFDWTMNPLKALYLQQRPEDESDLHSTPNADDQECKQSLSDTDQSFNKVAERVLMRLQEKLKGVEEGTVLSVGGQVNLLIQQAMDPKNLSRLFPGWKAWV.

S2 bears the N-acetylserine mark. S367 is subject to Phosphoserine; by autocatalysis. Residues 829–862 (LDHGVHPGEDDEDGGGCDSLMEAEGPSSTGLSTA) are disordered. Residues 1380 to 1389 (DPAPNPPYFP) are interaction with ABL1. At S1899 the chain carries Phosphoserine; by autocatalysis. An FAT domain is found at 1946–2576 (EVAKVAQSCS…LFIILALANA (631 aa)). Positions 1973-1982 (TDEQEKRSPT) are enriched in basic and acidic residues. Disordered stretches follow at residues 1973–2000 (TDEQ…EKSK) and 2585–2607 (PETT…LDED). Residues 1985–1996 (EGSQGTTISSLS) show a composition bias toward polar residues. S1987 carries the post-translational modification Phosphoserine; by autocatalysis. Residues 2597–2607 (TSKENSHLDED) are compositionally biased toward basic and acidic residues. The PI3K/PI4K catalytic domain occupies 2696–3009 (FKTEFRLAGG…ECKQSLSDTD (314 aa)). The tract at residues 2702 to 2708 (LAGGLNL) is G-loop. Residues 2877 to 2885 (GLGDRHVQN) are catalytic loop. The tract at residues 2897-2921 (HIDLGVAFEQGKILPTPETVPFRLS) is activation loop. The interval 2986–3007 (DESDLHSTPNADDQECKQSLSD) is disordered. Residues 2991–3007 (HSTPNADDQECKQSLSD) show a composition bias toward polar residues. Phosphoserine is present on S3006. K3026 carries the N6-acetyllysine modification. The 33-residue stretch at 3034–3066 (TVLSVGGQVNLLIQQAMDPKNLSRLFPGWKAWV) folds into the FATC domain. The short motif at 3056–3058 (SRL) is the Microbody targeting signal; atypical element.

This sequence belongs to the PI3/PI4-kinase family. ATM subfamily. Homodimer. Dimers or tetramers in inactive state. On DNA damage, autophosphorylation dissociates ATM into monomers rendering them catalytically active. Binds p53/TP53, ABL1, BRCA1 and TERF1. Interacts with NBN (via FxF/Y motif). Part of the BRCA1-associated genome surveillance complex (BASC), which contains BRCA1, MSH2, MSH6, MLH1, ATM, BLM, PMS2 and the RAD50-MRE11-NBN protein complex. This association could be a dynamic process changing throughout the cell cycle and within subnuclear domains. Interacts with RAD17; DNA damage promotes the association. Interacts with EEF1E1; the interaction, induced on DNA damage, up-regulates TP53. Interacts with KAT8, NABP2, ATMIN and CEP164. Interacts with AP2B1 and AP3B2; the interaction occurs in cytoplasmic vesicles. Interacts with TELO2 and TTI1. Interacts with DDX1. Interacts with BRAT1. Interacts with CYREN (via XLF motif). Interacts (via microbody targeting signal) with PEX5; promoting translocation to peroxisomes in response to reactive oxygen species (ROS). In terms of processing, phosphorylated by NUAK1/ARK5. Autophosphorylation on Ser-367, Ser-1899, Ser-1987 correlates with DNA damage-mediated activation of the kinase. Post-translationally, phosphorylated by NUAK1/ARK5. Autophosphorylation on Ser-367, Ser-1899, Ser-1987 correlates with DNA damage-mediated activation of the kinase. During the late stages of DNA damage response, dephosphorylated following deacetylation by SIRT7, leading to ATM deactivation. Acetylation, on DNA damage, is required for activation of the kinase activity, dimer-monomer transition, and subsequent autophosphorylation on Ser-1987. Acetylated in vitro by KAT5/TIP60. Deacetylated by SIRT7 during the late stages of DNA damage response, promoting ATM dephosphorylation and subsequent deactivation. Expressed in brain, skeletal muscle, testis, followed by spleen, lung, kidney, heart, liver and thymus. Ubiquitously expressed in embryonal tissues.

The protein resides in the nucleus. It is found in the cytoplasmic vesicle. The protein localises to the cytoplasm. Its subcellular location is the cytoskeleton. It localises to the microtubule organizing center. The protein resides in the centrosome. It is found in the peroxisome matrix. The enzyme catalyses L-seryl-[protein] + ATP = O-phospho-L-seryl-[protein] + ADP + H(+). It catalyses the reaction L-threonyl-[protein] + ATP = O-phospho-L-threonyl-[protein] + ADP + H(+). Its activity is regulated as follows. Activated by the MRN (MRE11-RAD50-NBS1) complex in response to DNA double strand breaks (DSBs), which recruits ATM to DSBs and promotes its activation. Inhibited by wortmannin. In terms of biological role, serine/threonine protein kinase which activates checkpoint signaling upon double strand breaks (DSBs), apoptosis and genotoxic stresses such as ionizing ultraviolet A light (UVA), thereby acting as a DNA damage sensor. Recognizes the substrate consensus sequence [ST]-Q. Phosphorylates 'Ser-139' of histone variant H2AX at double strand breaks (DSBs), thereby regulating DNA damage response mechanism. Also plays a role in pre-B cell allelic exclusion, a process leading to expression of a single immunoglobulin heavy chain allele to enforce clonality and monospecific recognition by the B-cell antigen receptor (BCR) expressed on individual B-lymphocytes. After the introduction of DNA breaks by the RAG complex on one immunoglobulin allele, acts by mediating a repositioning of the second allele to pericentromeric heterochromatin, preventing accessibility to the RAG complex and recombination of the second allele. Also involved in signal transduction and cell cycle control. May function as a tumor suppressor. Necessary for activation of ABL1 and SAPK. Phosphorylates DYRK2, CHEK2, p53/TP53, FBXW7, FANCD2, NFKBIA, BRCA1, CREBBP/CBP, RBBP8/CTIP, FBXO46, MRE11, nibrin (NBN), RAD50, RAD17, PELI1, TERF1, UFL1, RAD9, UBQLN4 and DCLRE1C. May play a role in vesicle and/or protein transport. Could play a role in T-cell development, gonad and neurological function. Binds DNA ends. Plays a role in replication-dependent histone mRNA degradation. Phosphorylation of DYRK2 in nucleus in response to genotoxic stress prevents its MDM2-mediated ubiquitination and subsequent proteasome degradation. Phosphorylates ATF2 which stimulates its function in DNA damage response. Phosphorylates ERCC6 which is essential for its chromatin remodeling activity at DNA double-strand breaks. Phosphorylates TTC5/STRAP at 'Ser-203' in the cytoplasm in response to DNA damage, which promotes TTC5/STRAP nuclear localization. Also involved in pexophagy by mediating phosphorylation of PEX5: translocated to peroxisomes in response to reactive oxygen species (ROS), and catalyzes phosphorylation of PEX5, promoting PEX5 ubiquitination and induction of pexophagy. This chain is Serine-protein kinase ATM (Atm), found in Mus musculus (Mouse).